Reading from the N-terminus, the 187-residue chain is Threonylcarbamoyl-AMP synthase (187 aa).

A YrdC-like domain is found at 4-187 (TLDLDRAVAA…DARSGQILRD (184 aa)).

Belongs to the SUA5 family. TsaC subfamily.

It is found in the cytoplasm. It catalyses the reaction L-threonine + hydrogencarbonate + ATP = L-threonylcarbamoyladenylate + diphosphate + H2O. In terms of biological role, required for the formation of a threonylcarbamoyl group on adenosine at position 37 (t(6)A37) in tRNAs that read codons beginning with adenine. Catalyzes the conversion of L-threonine, HCO(3)(-)/CO(2) and ATP to give threonylcarbamoyl-AMP (TC-AMP) as the acyladenylate intermediate, with the release of diphosphate. This chain is Threonylcarbamoyl-AMP synthase, found in Xanthomonas axonopodis pv. citri (strain 306).